The sequence spans 604 residues: Acetylcholinesterase 4 (604 aa).

Residues 1–23 (MKPKLVFLPFLIFITVFIEESEA) form the signal peptide. C88 and C115 are disulfide-bonded. 2 N-linked (GlcNAc...) asparagine glycosylation sites follow: N96 and N128. S219 (acyl-ester intermediate) is an active-site residue. The cysteines at positions 273 and 284 are disulfide-linked. 2 N-linked (GlcNAc...) asparagine glycosylation sites follow: N274 and N299. E347 (charge relay system) is an active-site residue. N-linked (GlcNAc...) asparagine glycans are attached at residues N400 and N446. The cysteines at positions 426 and 561 are disulfide-linked. H477 serves as the catalytic Charge relay system.

The protein belongs to the type-B carboxylesterase/lipase family.

The protein localises to the synapse. It localises to the secreted. It is found in the cell membrane. It catalyses the reaction acetylcholine + H2O = choline + acetate + H(+). Rapidly hydrolyzes choline released into the synapse. The protein is Acetylcholinesterase 4 (ace-4) of Caenorhabditis briggsae.